A 293-amino-acid chain; its full sequence is Elongation factor Ts (293 aa).

The tract at residues 80–83 (TDFV) is involved in Mg(2+) ion dislocation from EF-Tu.

It belongs to the EF-Ts family.

Its subcellular location is the cytoplasm. In terms of biological role, associates with the EF-Tu.GDP complex and induces the exchange of GDP to GTP. It remains bound to the aminoacyl-tRNA.EF-Tu.GTP complex up to the GTP hydrolysis stage on the ribosome. This Staphylococcus aureus (strain Mu3 / ATCC 700698) protein is Elongation factor Ts.